A 380-amino-acid chain; its full sequence is 4-hydroxy-3-methylbut-2-en-1-yl diphosphate synthase (flavodoxin) (380 aa).

[4Fe-4S] cluster contacts are provided by Cys-279, Cys-282, Cys-314, and Glu-321.

The protein belongs to the IspG family. [4Fe-4S] cluster serves as cofactor.

The enzyme catalyses (2E)-4-hydroxy-3-methylbut-2-enyl diphosphate + oxidized [flavodoxin] + H2O + 2 H(+) = 2-C-methyl-D-erythritol 2,4-cyclic diphosphate + reduced [flavodoxin]. It participates in isoprenoid biosynthesis; isopentenyl diphosphate biosynthesis via DXP pathway; isopentenyl diphosphate from 1-deoxy-D-xylulose 5-phosphate: step 5/6. In terms of biological role, converts 2C-methyl-D-erythritol 2,4-cyclodiphosphate (ME-2,4cPP) into 1-hydroxy-2-methyl-2-(E)-butenyl 4-diphosphate. The polypeptide is 4-hydroxy-3-methylbut-2-en-1-yl diphosphate synthase (flavodoxin) (Tropheryma whipplei (strain TW08/27) (Whipple's bacillus)).